Consider the following 193-residue polypeptide: MGGPGSSPCASCKLLRRRCAKDCIFAPYFPPDDPHKFAIVHKVFGASNVSKMLQELPVHQRADAVNSLVFEANARVRDPVYGCVGAISYLQNQVSQLQMQLAVAQAEILCIQMQNEPTLQSHHQVLELDQDHKALLLNNNNINNCNTNNNNNNFGYAMSSGQFNSNFASPSSIMQMQMQMQMQDPLKQESLWT.

The 102-residue stretch at 7 to 108 (SPCASCKLLR…MQLAVAQAEI (102 aa)) folds into the LOB domain.

It belongs to the LOB domain-containing protein family. In terms of tissue distribution, expressed predominantly in roots, and at low levels in shoots, floral stems and open flowers.

This is LOB domain-containing protein 12 (LBD12) from Arabidopsis thaliana (Mouse-ear cress).